A 65-amino-acid chain; its full sequence is uncharacterized protein (65 aa).

The Cytoplasmic portion of the chain corresponds to 1–20 (MRFSNCFNKFKFCIGTEKKY). Residues 21–43 (SFPICTSTYTSFSLFACIWSIFI) form a helical membrane-spanning segment. The Extracellular segment spans residues 44–65 (HISLNKSFIYQKSWYYSFFQNR).

The protein resides in the host membrane. This is an uncharacterized protein from Acidianus sp. F28 (AFV-2).